A 151-amino-acid chain; its full sequence is Neuroglobin (151 aa).

Positions 1–149 (MERPEPELIR…VVQAMSRGWD (149 aa)) constitute a Globin domain. Cys-46 and Cys-55 are joined by a disulfide. 2 residues coordinate heme b: His-64 and His-96.

The protein belongs to the globin family. Monomer. Homodimer and homotetramer; disulfide-linked. Mainly monomeric but also detected as part of homodimers and homotetramers. Interacts with 14-3-3 proteins; regulates the phosphorylation of NGB. Could interact (ferrous form) with G-alpha(i) proteins (GTP-bound form). In terms of processing, phosphorylated during hypoxia by ERK1/ERK2. Phosphorylation regulates the heme pocket hexacoordination preventing the association of His-64 with the heme metal center. Thereby, promotes the access of dioxygen and nitrite to the heme and stimulates the nitrite reductase activity. Phosphorylation during hypoxia is stabilized by 14-3-3 proteins. An intramolecular Cys-46/Cys-55 disulfide bond, not necessarily present in orthologs, regulates the heme pocket hexacoordination preventing the association of His-64 with the heme metal center. Thereby, promotes the access of dioxygen and nitrite to the heme and stimulates the nitrite reductase activity. Predominantly expressed in brain, the strongest expression is seen in the frontal lobe, the subthalamic nucleus and the thalamus.

It is found in the cytoplasm. The protein localises to the cytosol. The protein resides in the mitochondrion matrix. It carries out the reaction Fe(III)-heme b-[protein] + nitric oxide + H2O = Fe(II)-heme b-[protein] + nitrite + 2 H(+). Monomeric globin with a bis-histidyl six-coordinate heme-iron atom through which it can bind dioxygen, carbon monoxide and nitric oxide. Could help transport oxygen and increase its availability to the metabolically active neuronal tissues, though its low quantity in tissues as well as its high affinity for dioxygen, which may limit its oxygen-releasing ability, argue against it. The ferrous/deoxygenated form exhibits a nitrite reductase activity and it could produce nitric oxide which in turn inhibits cellular respiration in response to hypoxia. In its ferrous/deoxygenated state, it may also exhibit GDI (Guanine nucleotide Dissociation Inhibitor) activity toward heterotrimeric G-alpha proteins, thereby regulating signal transduction to facilitate neuroprotective responses in the wake of hypoxia and associated oxidative stress. This is Neuroglobin from Homo sapiens (Human).